The primary structure comprises 256 residues: Extracellular serine-rich protein ARB_03024 (256 aa).

A signal peptide spans 1 to 19 (MVATKSVLSAVALAGVAAA). A disordered region spans residues 135 to 235 (KIVPQSGSPT…TPTASPGAAA (101 aa)). The segment covering 149 to 159 (GTLGGSGGSGG) has biased composition (gly residues). Composition is skewed to low complexity over residues 160–204 (SSSS…QSTP) and 215–235 (PSAT…GAAA). Ala233 is lipidated: GPI-anchor amidated alanine. Residues 234–256 (AAGLKGSAVLAGVVALGAWIGLL) constitute a propeptide, removed in mature form.

The protein resides in the cell membrane. It is found in the secreted. The chain is Extracellular serine-rich protein ARB_03024 from Arthroderma benhamiae (strain ATCC MYA-4681 / CBS 112371) (Trichophyton mentagrophytes).